The chain runs to 332 residues: Aquaporin Lacbi1:317173 (332 aa).

A compositionally biased stretch (polar residues) spans 1–20; the sequence is MSGQHQITEQSSRNPLSRVS. The segment at 1–45 is disordered; the sequence is MSGQHQITEQSSRNPLSRVSTLLPEKPLSPTSTYAGTQKHPEAPR. Residues 1-66 are Cytoplasmic-facing; that stretch reads MSGQHQITEQ…RNAIRKPMAE (66 aa). Residues 67–87 traverse the membrane as a helical segment; that stretch reads FFGVALLIIFGAGSACQVVLS. The Extracellular segment spans residues 88–100; it reads TNPDVASSARGSF. The chain crosses the membrane as a helical span at residues 101-121; that stretch reads LSINFGWAIGIAMGVWVSGGI. The Cytoplasmic segment spans residues 122 to 144; the sequence is SGGHINPAITIAMATYRGFPWRK. Positions 127 to 129 match the NPA 1 motif; it reads NPA. A helical membrane pass occupies residues 145–165; sequence VPSYILAQVLGGVVGAGLVYA. Topologically, residues 166–199 are extracellular; it reads NYIHAIDIFEGGHHIRTQATASLFATYALPYMTQ. Residues 200-220 form a helical membrane-spanning segment; sequence ASCFFSEFLATAVLSMMVFAL. Over 221–230 the chain is Cytoplasmic; the sequence is TDKRNHSPTN. Residues 231–251 traverse the membrane as a helical segment; sequence GLLPFALFILFVGLGASLGME. The Extracellular segment spans residues 252-283; the sequence is TAYALNPARDFGPRLFLAMAGYGKALFNYRSQ. The short motif at 257 to 259 is the NPA 2 element; that stretch reads NPA. Residues 284 to 304 form a helical membrane-spanning segment; the sequence is YWLWAPIIAPVLGAQAGGLLY. Residues 305 to 332 lie on the Cytoplasmic side of the membrane; that stretch reads DTFLNDGDNSPIKWRCASSQEHQLAEVV.

The protein belongs to the MIP/aquaporin (TC 1.A.8) family.

It localises to the membrane. The enzyme catalyses H2O(in) = H2O(out). The catalysed reaction is NH4(+)(in) = NH4(+)(out). In terms of biological role, water channel required to facilitate the transport of water across membranes. Acts as the most efficient Laccaria water channel. In addition to water, also shows strong ammonium transport activity. May be involved in fungal nitrogen (ammonium) support of the plant host in symbiosis. The polypeptide is Aquaporin Lacbi1:317173 (Laccaria bicolor (strain S238N-H82 / ATCC MYA-4686) (Bicoloured deceiver)).